The following is a 164-amino-acid chain: UPF0114 protein YqhA (164 aa).

Transmembrane regions (helical) follow at residues 15 to 35 (LLAPVYFGLSLALVALALKFF), 53 to 73 (LILVLLSLVDMTLVGGLLVMV), and 136 to 156 (LMWYVIIHLTFVLSAFVMGYL).

The protein belongs to the UPF0114 family.

The protein localises to the cell membrane. The protein is UPF0114 protein YqhA of Shigella dysenteriae serotype 1 (strain Sd197).